The following is a 368-amino-acid chain: Peptide chain release factor 2 (368 aa).

An N5-methylglutamine modification is found at glutamine 251.

The protein belongs to the prokaryotic/mitochondrial release factor family. Post-translationally, methylated by PrmC. Methylation increases the termination efficiency of RF2.

It is found in the cytoplasm. In terms of biological role, peptide chain release factor 2 directs the termination of translation in response to the peptide chain termination codons UGA and UAA. The chain is Peptide chain release factor 2 from Wolinella succinogenes (strain ATCC 29543 / DSM 1740 / CCUG 13145 / JCM 31913 / LMG 7466 / NCTC 11488 / FDC 602W) (Vibrio succinogenes).